Reading from the N-terminus, the 87-residue chain is MANTSQARKRARQAGVRRVRNAGQRSMMRTYVKKIVKAIVSGDKSQAAAAYKEAVPILDRLARKGLVHPNKAARHKSRLNAQIRAMS.

The tract at residues 1 to 22 (MANTSQARKRARQAGVRRVRNA) is disordered. Residues 7-20 (ARKRARQAGVRRVR) show a composition bias toward basic residues.

This sequence belongs to the bacterial ribosomal protein bS20 family.

Binds directly to 16S ribosomal RNA. The polypeptide is Small ribosomal subunit protein bS20 (Nitrosococcus oceani (strain ATCC 19707 / BCRC 17464 / JCM 30415 / NCIMB 11848 / C-107)).